The primary structure comprises 93 residues: Large ribosomal subunit protein uL23 (93 aa).

It belongs to the universal ribosomal protein uL23 family. Part of the 50S ribosomal subunit. Contacts protein L29, and trigger factor when it is bound to the ribosome.

Its function is as follows. One of the early assembly proteins it binds 23S rRNA. One of the proteins that surrounds the polypeptide exit tunnel on the outside of the ribosome. Forms the main docking site for trigger factor binding to the ribosome. The chain is Large ribosomal subunit protein uL23 from Campylobacter jejuni subsp. jejuni serotype O:6 (strain 81116 / NCTC 11828).